A 77-amino-acid chain; its full sequence is uncharacterized protein (77 aa).

The disordered stretch occupies residues 54 to 77 (HHGRKHKEDMEARHEQLTKGGTIL). Over residues 59-70 (HKEDMEARHEQL) the composition is skewed to basic and acidic residues.

This is an uncharacterized protein from Escherichia coli O157:H7.